A 172-amino-acid polypeptide reads, in one-letter code: Small ribosomal subunit protein uS5 (172 aa).

One can recognise an S5 DRBM domain in the interval 16–79 (LKDRLVAINR…EAAKKNLIRV (64 aa)).

It belongs to the universal ribosomal protein uS5 family. Part of the 30S ribosomal subunit. Contacts proteins S4 and S8.

In terms of biological role, with S4 and S12 plays an important role in translational accuracy. Its function is as follows. Located at the back of the 30S subunit body where it stabilizes the conformation of the head with respect to the body. This is Small ribosomal subunit protein uS5 from Porphyromonas gingivalis (strain ATCC BAA-308 / W83).